Reading from the N-terminus, the 472-residue chain is Fumarate hydratase class II (472 aa).

Residues 1–20 form a disordered region; the sequence is MSPHENPSVETRTESDTFGP. Residues 105–107, 136–139, 146–148, and T194 each bind substrate; these read SGT, HPND, and SSN. The tract at residues 127 to 149 is disordered; that stretch reads GKRGGKSPVHPNDHCNRGQSSND. H195 (proton donor/acceptor) is an active-site residue. S325 is a catalytic residue. Residues S326 and 331–333 each bind substrate; that span reads KVN.

The protein belongs to the class-II fumarase/aspartase family. Fumarase subfamily. Homotetramer.

Its subcellular location is the cytoplasm. It catalyses the reaction (S)-malate = fumarate + H2O. It functions in the pathway carbohydrate metabolism; tricarboxylic acid cycle; (S)-malate from fumarate: step 1/1. In terms of biological role, involved in the TCA cycle. Catalyzes the stereospecific interconversion of fumarate to L-malate. The chain is Fumarate hydratase class II from Methylorubrum extorquens (strain ATCC 14718 / DSM 1338 / JCM 2805 / NCIMB 9133 / AM1) (Methylobacterium extorquens).